We begin with the raw amino-acid sequence, 115 residues long: Large ribosomal subunit protein uL22 (115 aa).

Belongs to the universal ribosomal protein uL22 family. Part of the 50S ribosomal subunit.

In terms of biological role, this protein binds specifically to 23S rRNA; its binding is stimulated by other ribosomal proteins, e.g. L4, L17, and L20. It is important during the early stages of 50S assembly. It makes multiple contacts with different domains of the 23S rRNA in the assembled 50S subunit and ribosome. Its function is as follows. The globular domain of the protein is located near the polypeptide exit tunnel on the outside of the subunit, while an extended beta-hairpin is found that lines the wall of the exit tunnel in the center of the 70S ribosome. This chain is Large ribosomal subunit protein uL22, found in Ligilactobacillus salivarius (strain UCC118) (Lactobacillus salivarius).